We begin with the raw amino-acid sequence, 77 residues long: uncharacterized protein (77 aa).

In terms of domain architecture, HTH cro/C1-type spans 11 to 65 (FARLRREKGLTQEEVEARSGFSQQYLSSLERGRRNPTVITLYELAQALGVSHVEL). The segment at residues 22–41 (QEEVEARSGFSQQYLSSLER) is a DNA-binding region (H-T-H motif).

This is an uncharacterized protein from Sinorhizobium fredii (strain NBRC 101917 / NGR234).